The chain runs to 402 residues: UDP-glucose 6-dehydrogenase (402 aa).

NAD(+)-binding positions include 2–19 (KIAV…GVLL), Val-11, Asp-29, Lys-34, Thr-83, Thr-118, and Glu-145. Substrate-binding positions include 141–145 (EFLRE), Lys-204, Asn-208, 249–253 (YNNPS), and Gly-257. Tyr-259 provides a ligand contact to NAD(+). The Nucleophile role is filled by Cys-260. NAD(+) is bound at residue Lys-263. Lys-320 is a binding site for substrate. Position 327 (Arg-327) interacts with NAD(+).

Belongs to the UDP-glucose/GDP-mannose dehydrogenase family.

It catalyses the reaction UDP-alpha-D-glucose + 2 NAD(+) + H2O = UDP-alpha-D-glucuronate + 2 NADH + 3 H(+). It participates in nucleotide-sugar biosynthesis; UDP-alpha-D-glucuronate biosynthesis; UDP-alpha-D-glucuronate from UDP-alpha-D-glucose: step 1/1. Functionally, catalyzes the formation of UDP-glucuronic acid which is required for capsular hyaluronic acid synthesis. This Streptococcus pyogenes serotype M1 protein is UDP-glucose 6-dehydrogenase (hasB).